The chain runs to 213 residues: Proteasome subunit beta (213 aa).

Positions 1–11 are cleaved as a propeptide — removed in mature form; by autocatalysis; that stretch reads MSMIEEKIYKG. Residue T12 is the Nucleophile of the active site.

The protein belongs to the peptidase T1B family. The 20S proteasome core is composed of 14 alpha and 14 beta subunits that assemble into four stacked heptameric rings, resulting in a barrel-shaped structure. The two inner rings, each composed of seven catalytic beta subunits, are sandwiched by two outer rings, each composed of seven alpha subunits. The catalytic chamber with the active sites is on the inside of the barrel. Has probably a gated structure, the ends of the cylinder being occluded by the N-termini of the alpha-subunits. Is likely capped at one or both ends by the proteasome regulatory ATPase, PAN.

Its subcellular location is the cytoplasm. The catalysed reaction is Cleavage of peptide bonds with very broad specificity.. With respect to regulation, the formation of the proteasomal ATPase PAN-20S proteasome complex, via the docking of the C-termini of PAN into the intersubunit pockets in the alpha-rings, triggers opening of the gate for substrate entry. Interconversion between the open-gate and close-gate conformations leads to a dynamic regulation of the 20S proteasome proteolysis activity. In terms of biological role, component of the proteasome core, a large protease complex with broad specificity involved in protein degradation. The chain is Proteasome subunit beta from Archaeoglobus fulgidus (strain ATCC 49558 / DSM 4304 / JCM 9628 / NBRC 100126 / VC-16).